The chain runs to 258 residues: Imidazole glycerol phosphate synthase subunit HisF (258 aa).

Catalysis depends on residues Asp-12 and Asp-131.

This sequence belongs to the HisA/HisF family. In terms of assembly, heterodimer of HisH and HisF.

It localises to the cytoplasm. It carries out the reaction 5-[(5-phospho-1-deoxy-D-ribulos-1-ylimino)methylamino]-1-(5-phospho-beta-D-ribosyl)imidazole-4-carboxamide + L-glutamine = D-erythro-1-(imidazol-4-yl)glycerol 3-phosphate + 5-amino-1-(5-phospho-beta-D-ribosyl)imidazole-4-carboxamide + L-glutamate + H(+). It participates in amino-acid biosynthesis; L-histidine biosynthesis; L-histidine from 5-phospho-alpha-D-ribose 1-diphosphate: step 5/9. Functionally, IGPS catalyzes the conversion of PRFAR and glutamine to IGP, AICAR and glutamate. The HisF subunit catalyzes the cyclization activity that produces IGP and AICAR from PRFAR using the ammonia provided by the HisH subunit. The sequence is that of Imidazole glycerol phosphate synthase subunit HisF from Nocardioides sp. (strain ATCC BAA-499 / JS614).